A 279-amino-acid polypeptide reads, in one-letter code: Acetyl-coenzyme A carboxylase carboxyl transferase subunit beta (279 aa).

A CoA carboxyltransferase N-terminal domain is found at leucine 23 to serine 279. Residues cysteine 27, cysteine 30, cysteine 46, and cysteine 49 each contribute to the Zn(2+) site. The C4-type zinc-finger motif lies at cysteine 27 to cysteine 49.

Belongs to the AccD/PCCB family. In terms of assembly, acetyl-CoA carboxylase is a heterohexamer composed of biotin carboxyl carrier protein (AccB), biotin carboxylase (AccC) and two subunits each of ACCase subunit alpha (AccA) and ACCase subunit beta (AccD). The cofactor is Zn(2+).

Its subcellular location is the cytoplasm. The enzyme catalyses N(6)-carboxybiotinyl-L-lysyl-[protein] + acetyl-CoA = N(6)-biotinyl-L-lysyl-[protein] + malonyl-CoA. It functions in the pathway lipid metabolism; malonyl-CoA biosynthesis; malonyl-CoA from acetyl-CoA: step 1/1. Its function is as follows. Component of the acetyl coenzyme A carboxylase (ACC) complex. Biotin carboxylase (BC) catalyzes the carboxylation of biotin on its carrier protein (BCCP) and then the CO(2) group is transferred by the transcarboxylase to acetyl-CoA to form malonyl-CoA. This is Acetyl-coenzyme A carboxylase carboxyl transferase subunit beta from Prosthecochloris aestuarii (strain DSM 271 / SK 413).